A 238-amino-acid polypeptide reads, in one-letter code: Ribosomal RNA small subunit methyltransferase G (238 aa).

Residues Gly78, Phe83, 129–130, and Arg148 each bind S-adenosyl-L-methionine; that span reads AE. Residues 217–238 form a disordered region; it reads KKKETPKKYPRKAGTPAKSPIK.

Belongs to the methyltransferase superfamily. RNA methyltransferase RsmG family.

It is found in the cytoplasm. In terms of biological role, specifically methylates the N7 position of a guanine in 16S rRNA. The sequence is that of Ribosomal RNA small subunit methyltransferase G from Lactococcus lactis subsp. cremoris (strain MG1363).